The following is a 241-amino-acid chain: Uridylate kinase (241 aa).

15–18 (KLSG) contacts ATP. The tract at residues 23–28 (GSEGFG) is involved in allosteric activation by GTP. Residue Gly57 coordinates UMP. Residues Gly58 and Arg62 each coordinate ATP. Residues Asp77 and 138–145 (TGNPFCTT) each bind UMP. Residues Thr165, Tyr171, and Asp174 each contribute to the ATP site.

Belongs to the UMP kinase family. Homohexamer.

The protein resides in the cytoplasm. It carries out the reaction UMP + ATP = UDP + ADP. It functions in the pathway pyrimidine metabolism; CTP biosynthesis via de novo pathway; UDP from UMP (UMPK route): step 1/1. Allosterically activated by GTP. Inhibited by UTP. Catalyzes the reversible phosphorylation of UMP to UDP. In Shewanella amazonensis (strain ATCC BAA-1098 / SB2B), this protein is Uridylate kinase.